Consider the following 306-residue polypeptide: Aspartate carbamoyltransferase catalytic subunit (306 aa).

Residues Arg55 and Thr56 each contribute to the carbamoyl phosphate site. Lys84 contributes to the L-aspartate binding site. Carbamoyl phosphate-binding residues include Arg105, His133, and Gln136. L-aspartate is bound by residues Arg166 and Arg227. Leu265 and Pro266 together coordinate carbamoyl phosphate.

It belongs to the aspartate/ornithine carbamoyltransferase superfamily. ATCase family. As to quaternary structure, heterododecamer (2C3:3R2) of six catalytic PyrB chains organized as two trimers (C3), and six regulatory PyrI chains organized as three dimers (R2).

The catalysed reaction is carbamoyl phosphate + L-aspartate = N-carbamoyl-L-aspartate + phosphate + H(+). It participates in pyrimidine metabolism; UMP biosynthesis via de novo pathway; (S)-dihydroorotate from bicarbonate: step 2/3. In terms of biological role, catalyzes the condensation of carbamoyl phosphate and aspartate to form carbamoyl aspartate and inorganic phosphate, the committed step in the de novo pyrimidine nucleotide biosynthesis pathway. This Neisseria meningitidis serogroup A / serotype 4A (strain DSM 15465 / Z2491) protein is Aspartate carbamoyltransferase catalytic subunit.